Reading from the N-terminus, the 176-residue chain is NAD(P)H-quinone oxidoreductase subunit 6, chloroplastic (176 aa).

The next 5 membrane-spanning stretches (helical) occupy residues 10–30 (FLLV…VLLT), 32–52 (PIFS…FHIP), 60–80 (AAQL…AVMF), 107–127 (IFVS…IWTT), and 152–172 (FFLP…GAIA).

It belongs to the complex I subunit 6 family. NDH is composed of at least 16 different subunits, 5 of which are encoded in the nucleus.

The protein resides in the plastid. Its subcellular location is the chloroplast thylakoid membrane. It carries out the reaction a plastoquinone + NADH + (n+1) H(+)(in) = a plastoquinol + NAD(+) + n H(+)(out). It catalyses the reaction a plastoquinone + NADPH + (n+1) H(+)(in) = a plastoquinol + NADP(+) + n H(+)(out). In terms of biological role, NDH shuttles electrons from NAD(P)H:plastoquinone, via FMN and iron-sulfur (Fe-S) centers, to quinones in the photosynthetic chain and possibly in a chloroplast respiratory chain. The immediate electron acceptor for the enzyme in this species is believed to be plastoquinone. Couples the redox reaction to proton translocation, and thus conserves the redox energy in a proton gradient. The polypeptide is NAD(P)H-quinone oxidoreductase subunit 6, chloroplastic (ndhG) (Buxus microphylla (Littleleaf boxwood)).